The primary structure comprises 255 residues: F-box/SPRY domain-containing protein 1 (255 aa).

An F-box domain is found at 3-51 (DPVAALCNYNVLEVIFSYLELEDLNHCSQVCKSWYHFLNDENSDVWRWH). The B30.2/SPRY domain occupies 61–253 (LKSDLLASVS…VSMVYLGTPL (193 aa)).

It belongs to the FBXO45/Fsn family. In terms of assembly, component of an E3 ubiquitin ligase complex composed of hiw and Fsn.

It localises to the synapse. The protein operates within protein modification; protein ubiquitination. Functionally, required in the presynaptic motoneuron to down-regulate the levels of wnd and restrain synaptic terminal growth at the neuromuscular junction (NMJ). This chain is F-box/SPRY domain-containing protein 1, found in Drosophila yakuba (Fruit fly).